We begin with the raw amino-acid sequence, 257 residues long: Ribonuclease HII (257 aa).

The 186-residue stretch at 72 to 257 (TYIAGIDEVG…FAPIKDMIQK (186 aa)) folds into the RNase H type-2 domain. D78, E79, and D170 together coordinate a divalent metal cation.

This sequence belongs to the RNase HII family. The cofactor is Mn(2+). Mg(2+) serves as cofactor.

It localises to the cytoplasm. The enzyme catalyses Endonucleolytic cleavage to 5'-phosphomonoester.. Its function is as follows. Endonuclease that specifically degrades the RNA of RNA-DNA hybrids. The polypeptide is Ribonuclease HII (Bacillus cereus (strain G9842)).